The primary structure comprises 280 residues: MTTLTRRGRRADVGQENRVDSEDYIKDKDEEESADSKDIRLTLMEEVLLLGLKDKEGYTSFWNDCISSGLRGGILIELFLRNRVVLEPSTLRKKRLTDRKVLLKSDTPTGDVLLDETLKHMKATEPAETVQSWIELLTGETWNPFKLQYQLRNVRERIAKNLVEKGILTTEKQNFLLFDMTTHPVSNTTEKQRLVKKLQESLLEKWVNDPHRMDRRTLALLVLAHSSDVLENAFSSLSDEKYDMAMTRSKELLDLDPDTEGNKPNTCEMIWAVLSAFNKS.

The segment at 1–30 (MTTLTRRGRRADVGQENRVDSEDYIKDKDE) is disordered. Residues 10–30 (RADVGQENRVDSEDYIKDKDE) show a composition bias toward basic and acidic residues. A 1,2-diacyl-sn-glycero-3-phospho-(1D-myo-inositol 4-phosphate) contacts are provided by tryptophan 62, arginine 71, arginine 152, and arginine 155. A beta-hairpin required for oligomerization region spans residues 171-182 (EKQNFLLFDMTT).

Belongs to the GOLPH3/VPS74 family. In terms of assembly, homooligomer.

It localises to the golgi apparatus. It is found in the golgi stack membrane. The protein resides in the trans-Golgi network membrane. In terms of biological role, phosphatidylinositol-4-phosphate-binding protein that may play a role in the process of vesicle budding at the Golgi and anterograde transport to the plasma membrane. This is Golgi phosphoprotein 3-like (golph3l) from Xenopus tropicalis (Western clawed frog).